A 201-amino-acid chain; its full sequence is Small ribosomal subunit protein uS4 (201 aa).

A disordered region spans residues 21–43; sequence GTGKELNRRPYAPGDHGQGRRQK. In terms of domain architecture, S4 RNA-binding spans 93 to 153; the sequence is RRLDNMVYRL…EKSKDMAIIK (61 aa).

The protein belongs to the universal ribosomal protein uS4 family. As to quaternary structure, part of the 30S ribosomal subunit. Contacts protein S5. The interaction surface between S4 and S5 is involved in control of translational fidelity.

In terms of biological role, one of the primary rRNA binding proteins, it binds directly to 16S rRNA where it nucleates assembly of the body of the 30S subunit. Functionally, with S5 and S12 plays an important role in translational accuracy. This Levilactobacillus brevis (strain ATCC 367 / BCRC 12310 / CIP 105137 / JCM 1170 / LMG 11437 / NCIMB 947 / NCTC 947) (Lactobacillus brevis) protein is Small ribosomal subunit protein uS4.